A 458-amino-acid chain; its full sequence is Transcription factor verZ (458 aa).

The zn(2)-C6 fungal-type DNA-binding region spans 117 to 144 (CDRCQAAKVKCGHEKPSCRRCTYHKVEC). 2 disordered regions span residues 153–256 (GRPR…MQSM) and 435–458 (MEEE…EDGK). Polar residues-rich tracts occupy residues 167–186 (PSPQ…SKSA), 193–207 (FTGT…QSPV), and 223–235 (RAEP…TTNF).

The protein resides in the nucleus. Functionally, transcription factor; part of the gene cluster that mediates the biosynthesis of 11'-deoxyverticillin A, one of the dimeric epipolythiodioxopiperazines (ETPs) from the verticillin family that act as mycotoxins. 11'-deoxyverticillin A is required for normal conidiation. Directly binds the consensus motif 5'-(T/C)(C/A)(G/T)GN3CC(G/T)(A/G)(G/C)-3' localized in the upstream regions of the verticillin biosynthetic genes. This Clonostachys rogersoniana protein is Transcription factor verZ.